The chain runs to 313 residues: Homeobox protein knotted-1-like 2 (313 aa).

The segment at D13–E40 is disordered. Low complexity predominate over residues P14–S27. Residues P28 to G38 show a composition bias toward gly residues. The 21-residue stretch at E205 to I225 folds into the ELK domain. A DNA-binding region (homeobox; TALE-type) is located at residues L226–N289. The segment at R282–W313 is disordered.

This sequence belongs to the TALE/KNOX homeobox family. Isoform 1 is expressed in roots, leaf blades, leaf sheaths and flowers. Isoform 2 is expressed in leaf blades, leaf sheaths and flowers.

The protein localises to the nucleus. This is Homeobox protein knotted-1-like 2 (HOS58) from Oryza sativa subsp. japonica (Rice).